The sequence spans 256 residues: MTDPRKAHDAEPTTHFGYKNVPESQKAQKVAEVFHSVAAKYDLMNDLMSGGIHRLWKRFTIELSGARHGNRILDIAGGTGDLTRQFSRIVGPTGEVVLADINASMLKVGRDKLLDKGVAGNVRFVQADAEKLPFPDNYFDVVTIAFGLRNVTHKEDAIASMLRVLKPGGRLLVLEFSKPTNQLFSKAYDAYSFSLLPMMGKLITNDSESYRYLAESIRMHPDQETLKGMMEAAGFERVSYHNMTGGIVALHRGIKP.

Residues T79, D100, and 128 to 129 (DA) contribute to the S-adenosyl-L-methionine site.

It belongs to the class I-like SAM-binding methyltransferase superfamily. MenG/UbiE family.

The enzyme catalyses a 2-demethylmenaquinol + S-adenosyl-L-methionine = a menaquinol + S-adenosyl-L-homocysteine + H(+). It carries out the reaction a 2-methoxy-6-(all-trans-polyprenyl)benzene-1,4-diol + S-adenosyl-L-methionine = a 5-methoxy-2-methyl-3-(all-trans-polyprenyl)benzene-1,4-diol + S-adenosyl-L-homocysteine + H(+). The protein operates within quinol/quinone metabolism; menaquinone biosynthesis; menaquinol from 1,4-dihydroxy-2-naphthoate: step 2/2. Its pathway is cofactor biosynthesis; ubiquinone biosynthesis. Methyltransferase required for the conversion of demethylmenaquinol (DMKH2) to menaquinol (MKH2) and the conversion of 2-polyprenyl-6-methoxy-1,4-benzoquinol (DDMQH2) to 2-polyprenyl-3-methyl-6-methoxy-1,4-benzoquinol (DMQH2). This chain is Ubiquinone/menaquinone biosynthesis C-methyltransferase UbiE, found in Stutzerimonas stutzeri (strain A1501) (Pseudomonas stutzeri).